The chain runs to 180 residues: E1B protein, small T-antigen (180 aa).

The segment at 142–180 is disordered; it reads GPAAPLARQGSQQEEQQQRQEEEQVQEEMRSGLDPPTEN. Residues 157-172 show a composition bias toward basic and acidic residues; sequence QQQRQEEEQVQEEMRS.

It belongs to the adenoviridae E1B 19 kDa protein family.

This Simian adenovirus serotype 7 (SAdV-7) protein is E1B protein, small T-antigen.